The primary structure comprises 433 residues: V-type ATP synthase beta chain (433 aa).

This sequence belongs to the ATPase alpha/beta chains family.

In terms of biological role, produces ATP from ADP in the presence of a proton gradient across the membrane. The V-type beta chain is a regulatory subunit. This chain is V-type ATP synthase beta chain, found in Borrelia turicatae (strain 91E135).